The sequence spans 208 residues: Uracil phosphoribosyltransferase (208 aa).

Residues R78, R103, and 130–138 (DPMLATGGS) contribute to the 5-phospho-alpha-D-ribose 1-diphosphate site. Residues I193 and 198–200 (GDA) each bind uracil. D199 contacts 5-phospho-alpha-D-ribose 1-diphosphate.

The protein belongs to the UPRTase family. Mg(2+) serves as cofactor.

It carries out the reaction UMP + diphosphate = 5-phospho-alpha-D-ribose 1-diphosphate + uracil. It functions in the pathway pyrimidine metabolism; UMP biosynthesis via salvage pathway; UMP from uracil: step 1/1. Allosterically activated by GTP. Functionally, catalyzes the conversion of uracil and 5-phospho-alpha-D-ribose 1-diphosphate (PRPP) to UMP and diphosphate. The polypeptide is Uracil phosphoribosyltransferase (Pectobacterium carotovorum subsp. carotovorum (strain PC1)).